The chain runs to 297 residues: Nucleotide-binding protein Bsph_0448 (297 aa).

19–26 (GMSGAGKT) contributes to the ATP binding site. Residue 70 to 73 (DMRG) participates in GTP binding.

Belongs to the RapZ-like family.

Functionally, displays ATPase and GTPase activities. This is Nucleotide-binding protein Bsph_0448 from Lysinibacillus sphaericus (strain C3-41).